A 160-amino-acid polypeptide reads, in one-letter code: S-ribosylhomocysteine lyase (160 aa).

His57, His61, and Cys127 together coordinate Fe cation.

Belongs to the LuxS family. In terms of assembly, homodimer. Fe cation is required as a cofactor.

It catalyses the reaction S-(5-deoxy-D-ribos-5-yl)-L-homocysteine = (S)-4,5-dihydroxypentane-2,3-dione + L-homocysteine. In terms of biological role, involved in the synthesis of autoinducer 2 (AI-2) which is secreted by bacteria and is used to communicate both the cell density and the metabolic potential of the environment. The regulation of gene expression in response to changes in cell density is called quorum sensing. Catalyzes the transformation of S-ribosylhomocysteine (RHC) to homocysteine (HC) and 4,5-dihydroxy-2,3-pentadione (DPD). The protein is S-ribosylhomocysteine lyase of Streptococcus thermophilus (strain CNRZ 1066).